The primary structure comprises 109 residues: Aquaporin-2 (109 aa).

Residues 1-6 lie on the Cytoplasmic side of the membrane; that stretch reads SIAFSR. A helical transmembrane segment spans residues 7 to 27; the sequence is AVLAEFLATLLFVFFGLGSAL. The Extracellular portion of the chain corresponds to 28 to 35; the sequence is NWPQAMPS. Residues 36–54 form a helical membrane-spanning segment; sequence VLQIAMAFGLAIGTLVQAL. At 55-59 the chain is on the cytoplasmic side; sequence GHVSG. The segment at residues 60 to 69 is an intramembrane region (discontinuously helical); the sequence is AHINPAVTVA. The NPA 1 motif lies at 63-65; sequence NPA. Residues 70-80 lie on the Cytoplasmic side of the membrane; sequence CLVGCHVSFLR. The helical transmembrane segment at 81 to 102 threads the bilayer; it reads AAFYVAAQLLGAVAGAALLHEI. The Extracellular portion of the chain corresponds to 103-109; sequence TPPDIRR.

Belongs to the MIP/aquaporin (TC 1.A.8) family. Homotetramer. In terms of processing, serine phosphorylation is necessary and sufficient for expression at the apical membrane. Endocytosis is not phosphorylation-dependent. Post-translationally, N-glycosylated.

The protein localises to the apical cell membrane. The protein resides in the basolateral cell membrane. Its subcellular location is the cell membrane. It localises to the cytoplasmic vesicle membrane. It is found in the golgi apparatus. The protein localises to the trans-Golgi network membrane. The catalysed reaction is H2O(in) = H2O(out). It catalyses the reaction glycerol(in) = glycerol(out). Its function is as follows. Forms a water-specific channel that provides the plasma membranes of renal collecting duct with high permeability to water, thereby permitting water to move in the direction of an osmotic gradient. Plays an essential role in renal water homeostasis. Could also be permeable to glycerol. This chain is Aquaporin-2, found in Equus caballus (Horse).